Reading from the N-terminus, the 430-residue chain is Aspartate aminotransferase, mitochondrial (430 aa).

The N-terminal 29 residues, 1–29, are a transit peptide targeting the mitochondrion; the sequence is MALLHSGRVLPGIAAAFHPGLAAAASARA. Thr48 bears the Phosphothreonine mark. Position 59 is an N6-acetyllysine (Lys59). Gly65 lines the substrate pocket. Lys73 bears the N6-acetyllysine; alternate mark. Lys73 bears the N6-succinyllysine; alternate mark. Lys82 carries the post-translational modification N6-acetyllysine. Lys90 carries the post-translational modification N6-acetyllysine; alternate. An N6-succinyllysine; alternate modification is found at Lys90. At Tyr96 the chain carries 3'-nitrotyrosine; alternate. Tyr96 is subject to Phosphotyrosine; alternate. An N6-acetyllysine; alternate mark is found at Lys107 and Lys122. Lys107 and Lys122 each carry N6-succinyllysine; alternate. Residue Ser143 is modified to Phosphoserine. Lys159 carries the N6-acetyllysine; alternate modification. Lys159 is modified (N6-succinyllysine; alternate). Trp162 contributes to the substrate binding site. Lys185 bears the N6-acetyllysine; alternate mark. At Lys185 the chain carries N6-succinyllysine; alternate. Asn215 is a binding site for substrate. Lys227 is modified (N6-succinyllysine). The residue at position 234 (Lys234) is an N6-acetyllysine. Lys279 and Lys296 each carry N6-acetyllysine; alternate. Lys279 carries the post-translational modification N6-(pyridoxal phosphate)lysine; alternate. Position 296 is an N6-succinyllysine; alternate (Lys296). Lys302 is modified (N6-acetyllysine). An N6-acetyllysine; alternate modification is found at Lys309. The residue at position 309 (Lys309) is an N6-succinyllysine; alternate. Arg313 is subject to Asymmetric dimethylarginine. Residue Thr333 is modified to Phosphothreonine. Lys338 carries the N6-acetyllysine; alternate modification. Position 338 is an N6-succinyllysine; alternate (Lys338). Lys345 is subject to N6-acetyllysine. Lys363 is subject to N6-acetyllysine; alternate. Lys363 is subject to N6-succinyllysine; alternate. Lys364 and Lys387 each carry N6-acetyllysine. 2 positions are modified to N6-acetyllysine; alternate: Lys396 and Lys404. 2 positions are modified to N6-succinyllysine; alternate: Lys396 and Lys404. Arg407 contributes to the substrate binding site.

The protein belongs to the class-I pyridoxal-phosphate-dependent aminotransferase family. Homodimer. The cofactor is pyridoxal 5'-phosphate.

Its subcellular location is the mitochondrion matrix. The protein localises to the cell membrane. It catalyses the reaction L-aspartate + 2-oxoglutarate = oxaloacetate + L-glutamate. The catalysed reaction is L-kynurenine + 2-oxoglutarate = kynurenate + L-glutamate + H2O. In terms of biological role, catalyzes the irreversible transamination of the L-tryptophan metabolite L-kynurenine to form kynurenic acid (KA). As a member of the malate-aspartate shuttle, it has a key role in the intracellular NAD(H) redox balance. Is important for metabolite exchange between mitochondria and cytosol, and for amino acid metabolism. Facilitates cellular uptake of long-chain free fatty acids. This Homo sapiens (Human) protein is Aspartate aminotransferase, mitochondrial.